The following is a 109-amino-acid chain: Putative double-stranded DNA mimic protein CKO_01325 (109 aa).

It belongs to the putative dsDNA mimic protein family.

May act as a double-stranded DNA (dsDNA) mimic. Probably regulates the activity of a dsDNA-binding protein. In Citrobacter koseri (strain ATCC BAA-895 / CDC 4225-83 / SGSC4696), this protein is Putative double-stranded DNA mimic protein CKO_01325.